Consider the following 323-residue polypeptide: Prenyl transferase (323 aa).

Lys46, Arg49, and His81 together coordinate isopentenyl diphosphate. Residues Asp88 and Asp92 each coordinate Mg(2+). Residue Arg97 coordinates an all-trans-polyprenyl diphosphate. Arg98 lines the isopentenyl diphosphate pocket. The an all-trans-polyprenyl diphosphate site is built by Lys174, Thr175, and Gln212.

This sequence belongs to the FPP/GGPP synthase family. Mg(2+) serves as cofactor.

Possible role in synthesis of the nonaprenyl side chain of plastoquinone or in synthesis of other prenyl chains such as undekaprenyl pyrophosphate. The protein is Prenyl transferase (preA) of Synechocystis sp. (strain ATCC 27184 / PCC 6803 / Kazusa).